The sequence spans 130 residues: Small ribosomal subunit protein uS9 (130 aa).

A disordered region spans residues 107-130 (DARMKERKKPGLKKARKASQFSKR). The span at 111 to 130 (KERKKPGLKKARKASQFSKR) shows a compositional bias: basic residues.

This sequence belongs to the universal ribosomal protein uS9 family.

The sequence is that of Small ribosomal subunit protein uS9 from Ligilactobacillus salivarius (strain UCC118) (Lactobacillus salivarius).